The chain runs to 149 residues: Nucleoside diphosphate kinase 1 (149 aa).

Residues lysine 9, phenylalanine 57, arginine 85, threonine 91, arginine 102, and asparagine 112 each coordinate ATP. Residue histidine 115 is the Pros-phosphohistidine intermediate of the active site.

Belongs to the NDK family. The cofactor is Mg(2+). Autophosphorylated.

It catalyses the reaction a 2'-deoxyribonucleoside 5'-diphosphate + ATP = a 2'-deoxyribonucleoside 5'-triphosphate + ADP. It carries out the reaction a ribonucleoside 5'-diphosphate + ATP = a ribonucleoside 5'-triphosphate + ADP. Its function is as follows. Major role in the synthesis of nucleoside triphosphates other than ATP. The ATP gamma phosphate is transferred to the NDP beta phosphate via a ping-pong mechanism, using a phosphorylated active-site intermediate. Also exhibits a kinase-like activity towards histone H1. The protein is Nucleoside diphosphate kinase 1 (NDPK1) of Saccharum officinarum (Sugarcane).